The primary structure comprises 167 residues: MAAQGWSMLLLAVLNLGIFVRPCDTQELRCLCIQEHSEFIPLKLIKNIMVIFETIYCNRKEVIAVPKNGSMICLDPDAPWVKATVGPITNRFLPEDLKQKEFPPAMKLLYSVEHEKPLYLSFGRPENKRIFPFPIRETSRHFADLAHNSDRNFLRDSSEVSLTGSDA.

The signal sequence occupies residues 1 to 25; sequence MAAQGWSMLLLAVLNLGIFVRPCDT. Intrachain disulfides connect Cys30–Cys57 and Cys32–Cys73. Phosphoserine is present on Ser157.

The protein belongs to the intercrine alpha (chemokine CxC) family. As to expression, expression restricted to the lung, produced by bronchoepithelial cells and is released into the airways. Expressed at low levels in fetal lung.

The protein resides in the secreted. Chemotactic for neutrophils. Involved in lung-specific neutrophil trafficking during normal and inflammatory conditions. The sequence is that of C-X-C motif chemokine 15 (Cxcl15) from Mus musculus (Mouse).